Reading from the N-terminus, the 61-residue chain is Photosystem II reaction center protein K (61 aa).

Positions 1 to 24 are excised as a propeptide; sequence MLNIFSLIWICLNSALYSSGFFFG. Residues 36–56 form a helical membrane-spanning segment; it reads IIDFMPVIPVFFFLLAFVWQA.

The protein belongs to the PsbK family. PSII is composed of 1 copy each of membrane proteins PsbA, PsbB, PsbC, PsbD, PsbE, PsbF, PsbH, PsbI, PsbJ, PsbK, PsbL, PsbM, PsbT, PsbX, PsbY, PsbZ, Psb30/Ycf12, at least 3 peripheral proteins of the oxygen-evolving complex and a large number of cofactors. It forms dimeric complexes.

The protein resides in the plastid. It is found in the chloroplast thylakoid membrane. Its function is as follows. One of the components of the core complex of photosystem II (PSII). PSII is a light-driven water:plastoquinone oxidoreductase that uses light energy to abstract electrons from H(2)O, generating O(2) and a proton gradient subsequently used for ATP formation. It consists of a core antenna complex that captures photons, and an electron transfer chain that converts photonic excitation into a charge separation. The chain is Photosystem II reaction center protein K from Coffea arabica (Arabian coffee).